The chain runs to 265 residues: Type 1 encapsulin shell protein (265 aa).

Belongs to the encapsulin family. Family 1 subfamily. Found in a complex with DyP, suggesting it is the native cargo protein. Monomers form pentamers, which assemble to form hollow shells composed of 60 subunits with several openings.

The protein localises to the encapsulin nanocompartment. It is found in the cell membrane. Functionally, shell component of a type 1 encapsulin nanocompartment. Assembles into proteinaceous shells 23-24 nm in diameter with 2-2.5 nm thick walls. Cargo protein DyP is targeted to the interior via its C-terminal extension; probably only 1 DyP hexamer is incorporated into each shell. Probably involved in protection against oxidative damage. The chain is Type 1 encapsulin shell protein from Mycolicibacterium paratuberculosis (strain ATCC BAA-968 / K-10) (Mycobacterium paratuberculosis).